The following is a 316-amino-acid chain: Pantothenate kinase (316 aa).

95-102 (GSVAVGKS) provides a ligand contact to ATP.

Belongs to the prokaryotic pantothenate kinase family.

It is found in the cytoplasm. The enzyme catalyses (R)-pantothenate + ATP = (R)-4'-phosphopantothenate + ADP + H(+). It participates in cofactor biosynthesis; coenzyme A biosynthesis; CoA from (R)-pantothenate: step 1/5. This Shewanella baltica (strain OS223) protein is Pantothenate kinase.